The primary structure comprises 114 residues: Large ribosomal subunit protein bL19 (114 aa).

The protein belongs to the bacterial ribosomal protein bL19 family.

This protein is located at the 30S-50S ribosomal subunit interface and may play a role in the structure and function of the aminoacyl-tRNA binding site. The protein is Large ribosomal subunit protein bL19 of Clostridium acetobutylicum (strain ATCC 824 / DSM 792 / JCM 1419 / IAM 19013 / LMG 5710 / NBRC 13948 / NRRL B-527 / VKM B-1787 / 2291 / W).